The following is a 418-amino-acid chain: AP-3 complex subunit mu-1 (418 aa).

The region spanning 176–417 is the MHD domain; sequence NNEAYFDVIE…ITKAGKFQVR (242 aa).

It belongs to the adaptor complexes medium subunit family. The AP-3 complex associates with the BLOC-1 complex.

Its subcellular location is the golgi apparatus. It localises to the cytoplasmic vesicle membrane. Part of the AP-3 complex, an adaptor-related complex which is not clathrin-associated. The complex is associated with the Golgi region as well as more peripheral structures. It facilitates the budding of vesicles from the Golgi membrane and may be directly involved in trafficking to lysosomes. In concert with the BLOC-1 complex, AP-3 is required to target cargos into vesicles assembled at cell bodies for delivery into neurites and nerve terminals. This chain is AP-3 complex subunit mu-1 (AP3M1), found in Gallus gallus (Chicken).